The sequence spans 357 residues: DNA replication and repair protein RecF (357 aa).

Position 30 to 37 (30 to 37) interacts with ATP; it reads GANGSGKT.

This sequence belongs to the RecF family.

The protein resides in the cytoplasm. Functionally, the RecF protein is involved in DNA metabolism; it is required for DNA replication and normal SOS inducibility. RecF binds preferentially to single-stranded, linear DNA. It also seems to bind ATP. The polypeptide is DNA replication and repair protein RecF (Cronobacter sakazakii (strain ATCC BAA-894) (Enterobacter sakazakii)).